We begin with the raw amino-acid sequence, 453 residues long: tRNA modification GTPase MnmE (453 aa).

(6S)-5-formyl-5,6,7,8-tetrahydrofolate-binding residues include arginine 22, glutamate 79, and lysine 119. The region spanning 215–376 (GMKVVIAGRP…LKQHLKSLMG (162 aa)) is the TrmE-type G domain. Asparagine 225 provides a ligand contact to K(+). Residues 225–230 (NAGKSS), 244–250 (TEIAGTT), 269–272 (DTAG), and 334–337 (NKAD) each bind GTP. A Mg(2+)-binding site is contributed by serine 229. K(+) is bound by residues threonine 244, isoleucine 246, and threonine 249. Threonine 250 contacts Mg(2+). Residue lysine 453 participates in (6S)-5-formyl-5,6,7,8-tetrahydrofolate binding.

Belongs to the TRAFAC class TrmE-Era-EngA-EngB-Septin-like GTPase superfamily. TrmE GTPase family. In terms of assembly, homodimer. Heterotetramer of two MnmE and two MnmG subunits. Requires K(+) as cofactor.

The protein localises to the cytoplasm. Exhibits a very high intrinsic GTPase hydrolysis rate. Involved in the addition of a carboxymethylaminomethyl (cmnm) group at the wobble position (U34) of certain tRNAs, forming tRNA-cmnm(5)s(2)U34. The protein is tRNA modification GTPase MnmE of Shewanella baltica (strain OS195).